Consider the following 349-residue polypeptide: uncharacterized protein (349 aa).

A signal peptide spans 1–25; that stretch reads MNKYIKQGAPILGILLAVMFGGREG.

It belongs to the bacterial solute-binding protein 1 family. WtpA subfamily.

This is an uncharacterized protein from Methanococcus aeolicus (strain ATCC BAA-1280 / DSM 17508 / OCM 812 / Nankai-3).